Here is a 320-residue protein sequence, read N- to C-terminus: Cytochrome f (320 aa).

A signal peptide spans 1–35; that stretch reads MNFFTHKKNNFGSFVTIFSFLVALGVTNLTPAAEA. Tyrosine 36, cysteine 56, cysteine 59, and histidine 60 together coordinate heme. The helical transmembrane segment at 286-306 threads the bilayer; the sequence is IQGLLVFFATVLFAQVLLVLK.

It belongs to the cytochrome f family. As to quaternary structure, the 4 large subunits of the cytochrome b6-f complex are cytochrome b6, subunit IV (17 kDa polypeptide, petD), cytochrome f and the Rieske protein, while the 4 small subunits are PetG, PetL, PetM and PetN. The complex functions as a dimer. Heme serves as cofactor.

Its subcellular location is the plastid. It localises to the chloroplast thylakoid membrane. Functionally, component of the cytochrome b6-f complex, which mediates electron transfer between photosystem II (PSII) and photosystem I (PSI), cyclic electron flow around PSI, and state transitions. This is Cytochrome f from Tetradesmus obliquus (Green alga).